We begin with the raw amino-acid sequence, 672 residues long: Bifunctional polymyxin resistance protein ArnA (672 aa).

Residues 1–310 are formyltransferase ArnAFT; it reads MKAIVFAYHD…EMGMVPQAKL (310 aa). His104 serves as the catalytic Proton donor; for formyltransferase activity. Residues Arg114 and 136–140 contribute to the (6R)-10-formyltetrahydrofolate site; that span reads VSRAD. Residues 320–672 form a dehydrogenase ArnADH region; the sequence is RRTRVLILGV…HADNVTDTQG (353 aa). NAD(+) contacts are provided by residues Asp353 and 374–375; that span reads DI. UDP-alpha-D-glucuronate is bound by residues Ala399, Tyr404, and 438 to 439; that span reads TS. Glu440 serves as the catalytic Proton acceptor; for decarboxylase activity. UDP-alpha-D-glucuronate-binding positions include Arg466, Asn498, 532-541, and Tyr619; that span reads KLVDGGAQKR. Arg625 functions as the Proton donor; for decarboxylase activity in the catalytic mechanism.

This sequence in the N-terminal section; belongs to the Fmt family. UDP-L-Ara4N formyltransferase subfamily. In the C-terminal section; belongs to the NAD(P)-dependent epimerase/dehydratase family. UDP-glucuronic acid decarboxylase subfamily. In terms of assembly, homohexamer, formed by a dimer of trimers.

The enzyme catalyses UDP-alpha-D-glucuronate + NAD(+) = UDP-beta-L-threo-pentopyranos-4-ulose + CO2 + NADH. The catalysed reaction is UDP-4-amino-4-deoxy-beta-L-arabinose + (6R)-10-formyltetrahydrofolate = UDP-4-deoxy-4-formamido-beta-L-arabinose + (6S)-5,6,7,8-tetrahydrofolate + H(+). Its pathway is nucleotide-sugar biosynthesis; UDP-4-deoxy-4-formamido-beta-L-arabinose biosynthesis; UDP-4-deoxy-4-formamido-beta-L-arabinose from UDP-alpha-D-glucuronate: step 1/3. It functions in the pathway nucleotide-sugar biosynthesis; UDP-4-deoxy-4-formamido-beta-L-arabinose biosynthesis; UDP-4-deoxy-4-formamido-beta-L-arabinose from UDP-alpha-D-glucuronate: step 3/3. It participates in bacterial outer membrane biogenesis; lipopolysaccharide biosynthesis. In terms of biological role, bifunctional enzyme that catalyzes the oxidative decarboxylation of UDP-glucuronic acid (UDP-GlcUA) to UDP-4-keto-arabinose (UDP-Ara4O) and the addition of a formyl group to UDP-4-amino-4-deoxy-L-arabinose (UDP-L-Ara4N) to form UDP-L-4-formamido-arabinose (UDP-L-Ara4FN). The modified arabinose is attached to lipid A and is required for resistance to polymyxin and cationic antimicrobial peptides. The sequence is that of Bifunctional polymyxin resistance protein ArnA from Pectobacterium carotovorum subsp. carotovorum (strain PC1).